We begin with the raw amino-acid sequence, 790 residues long: E3 ubiquitin-protein ligase Jade-2 (790 aa).

Disordered stretches follow at residues 1 to 52 (MEEK…PSEV) and 111 to 130 (GPPAQASPSSTMLGEGSQPD). Ser-9 and Ser-15 each carry phosphoserine. The segment covering 9–28 (SISSDNSDTTDSHATSTSAS) has biased composition (low complexity). Residues Lys-32 and Lys-38 each carry the N6-acetyllysine modification. Ser-117 is modified (phosphoserine). The PHD-type 1 zinc finger occupies 199 to 249 (DVVCDVCRSPEGEDGNEMVFCDKCNVCVHQACYGILKVPTGSWLCRTCALG). A C2HC pre-PHD-type zinc finger spans residues 251–285 (QPKCLLCPKRGGALKPTRSGTKWVHVSCALWIPEV). Lys-298 carries the N6-acetyllysine modification. The PHD-type 2 zinc-finger motif lies at 309–365 (LSCSLCKECTGTCIQCSMPSCVTAFHVTCAFDHGLEMRTILADNDEVKFKSFCQEHS). Disordered regions lie at residues 361–386 (CQEHSDGGPRNEPTSEPTEPSQAGED) and 578–777 (SFMR…PREA). The span at 372 to 381 (EPTSEPTEPS) shows a compositional bias: polar residues. Residues 593-606 (KARGRTRLPAKKKP) show a composition bias toward basic residues. Residues 684–693 (AASVAADSDV) show a composition bias toward low complexity. Residues 737 to 747 (ERPKVSLHFDT) show a composition bias toward basic and acidic residues. Acidic residues predominate over residues 757-767 (EMSDSDVEAED).

Belongs to the JADE family. As to quaternary structure, component of the HBO1 complex composed at least of ING4 or ING5, MYST2/HBO1, MEAF6, and one of JADE1, JADE2 and JADE3. Interacts (via C-terminus) with KDM1A (via AOD/Tower domain).

It carries out the reaction S-ubiquitinyl-[E2 ubiquitin-conjugating enzyme]-L-cysteine + [acceptor protein]-L-lysine = [E2 ubiquitin-conjugating enzyme]-L-cysteine + N(6)-ubiquitinyl-[acceptor protein]-L-lysine.. It functions in the pathway protein modification; protein ubiquitination. Scaffold subunit of some HBO1 complexes, which have a histone H4 acetyltransferase activity. Acts as an E3 ubiquitin-protein ligase mediating the ubiquitination and subsequent proteasomal degradation of target protein histone demethylase KDM1A. Also acts as a ubiquitin ligase E3 toward itself. Positive regulator of neurogenesis. This chain is E3 ubiquitin-protein ligase Jade-2 (JADE2), found in Homo sapiens (Human).